We begin with the raw amino-acid sequence, 231 residues long: MTQDELKQLVGQAAADYVIANVPEGTIIGVGTGSTANCFIDALAAHKARFRGAVSSSVATTARLQSHGIPVFDLNDIESLPVYVDGADEIDHGGAMIKGGGGALTREKIVASVAEKFLCIADASKVVDVLGQFPLPVEVVPMARTAIGRRVTALGGVPIVRVTKDGAPFLTDNGNEIIDVKGLRITDPRTLEAHVNAWPGVVTVGLFAARGADLCLLGTQKGVETIVYPNR.

Substrate is bound by residues 32–35 (TGST), 85–88 (DGAD), and 98–101 (KGGG). E107 (proton acceptor) is an active-site residue. K125 serves as a coordination point for substrate.

Belongs to the ribose 5-phosphate isomerase family. As to quaternary structure, homodimer.

The enzyme catalyses aldehydo-D-ribose 5-phosphate = D-ribulose 5-phosphate. Its pathway is carbohydrate degradation; pentose phosphate pathway; D-ribose 5-phosphate from D-ribulose 5-phosphate (non-oxidative stage): step 1/1. Its function is as follows. Catalyzes the reversible conversion of ribose-5-phosphate to ribulose 5-phosphate. The protein is Ribose-5-phosphate isomerase A of Paraburkholderia phymatum (strain DSM 17167 / CIP 108236 / LMG 21445 / STM815) (Burkholderia phymatum).